Reading from the N-terminus, the 198-residue chain is Imidazole glycerol phosphate synthase subunit HisH (198 aa).

Residues 2–198 enclose the Glutamine amidotransferase type-1 domain; that stretch reads KALLIDYGSG…ALARRYFEVL (197 aa). C80 functions as the Nucleophile in the catalytic mechanism. Active-site residues include H176 and E178.

In terms of assembly, heterodimer of HisH and HisF.

The protein resides in the cytoplasm. It catalyses the reaction 5-[(5-phospho-1-deoxy-D-ribulos-1-ylimino)methylamino]-1-(5-phospho-beta-D-ribosyl)imidazole-4-carboxamide + L-glutamine = D-erythro-1-(imidazol-4-yl)glycerol 3-phosphate + 5-amino-1-(5-phospho-beta-D-ribosyl)imidazole-4-carboxamide + L-glutamate + H(+). The catalysed reaction is L-glutamine + H2O = L-glutamate + NH4(+). It participates in amino-acid biosynthesis; L-histidine biosynthesis; L-histidine from 5-phospho-alpha-D-ribose 1-diphosphate: step 5/9. In terms of biological role, IGPS catalyzes the conversion of PRFAR and glutamine to IGP, AICAR and glutamate. The HisH subunit catalyzes the hydrolysis of glutamine to glutamate and ammonia as part of the synthesis of IGP and AICAR. The resulting ammonia molecule is channeled to the active site of HisF. The protein is Imidazole glycerol phosphate synthase subunit HisH of Thermus thermophilus (strain ATCC BAA-163 / DSM 7039 / HB27).